Consider the following 780-residue polypeptide: Cullin-1 (780 aa).

A Cullin neddylation domain is found at 710–771 (DRKSVISACI…EKEYMLRTEG (62 aa)). Lys724 participates in a covalent cross-link: Glycyl lysine isopeptide (Lys-Gly) (interchain with G-Cter in NEDD8).

This sequence belongs to the cullin family. In terms of assembly, component of an SCF (SKP1-CUL1-F-box protein) E3 ubiquitin ligase complex composed of cul-1, fsn-1, rpm-1 and skr-1. Interacts with Skp1-related proteins skr-1, skr-2, skr-3, skr-4, skr-7, skr-8, skr-9 and skr-10. In terms of processing, neddylated; which enhances the ubiquitination activity of SCF. As to expression, ubiquitous.

It localises to the cytoplasm. It functions in the pathway protein modification; protein ubiquitination. Its function is as follows. Probable core component of multiple cullin-RING-based SCF (SKP1-CUL1-F-box) E3 ubiquitin-protein ligase complexes which mediate the ubiquitination and subsequent proteasomal degradation of target proteins. As a scaffold protein may contribute to catalysis through positioning of the substrate and the ubiquitin-conjugating enzyme. Required for developmentally programmed transitions from the G1 phase of the cell cycle to the G0 phase or the apoptotic pathway. In Caenorhabditis elegans, this protein is Cullin-1 (cul-1).